Reading from the N-terminus, the 516-residue chain is L-amino acid oxidase bordonein-L (516 aa).

The N-terminal stretch at 1–18 (MNVFFMFSLLFLAALGSC) is a signal peptide. Cys28 and Cys189 form a disulfide bridge. Residues 61–62 (MA), 81–82 (EA), Arg89, and 103–106 (GPMR) contribute to the FAD site. Residues Arg106 and His239 each contribute to the substrate site. Val279 is a binding site for FAD. A disulfide bridge links Cys349 with Cys430. Residue Asn379 is glycosylated (N-linked (GlcNAc...) asparagine). Tyr390 contributes to the substrate binding site. FAD is bound by residues Glu475 and 482-487 (GWIDST). 482-483 (GW) serves as a coordination point for substrate.

Homodimer; non-covalently linked. It depends on FAD as a cofactor. N-glycosylated. N-glycan probably consists of the disaccharide N-acetylglucosamine-fucose (HexNAc-Fuc). In terms of tissue distribution, expressed by the venom gland.

The protein resides in the secreted. It carries out the reaction an L-alpha-amino acid + O2 + H2O = a 2-oxocarboxylate + H2O2 + NH4(+). The catalysed reaction is L-leucine + O2 + H2O = 4-methyl-2-oxopentanoate + H2O2 + NH4(+). The enzyme catalyses L-phenylalanine + O2 + H2O = 3-phenylpyruvate + H2O2 + NH4(+). It catalyses the reaction L-tryptophan + O2 + H2O = indole-3-pyruvate + H2O2 + NH4(+). It carries out the reaction L-methionine + O2 + H2O = 4-methylsulfanyl-2-oxobutanoate + H2O2 + NH4(+). The catalysed reaction is L-isoleucine + O2 + H2O = (S)-3-methyl-2-oxopentanoate + H2O2 + NH4(+). The enzyme catalyses L-arginine + O2 + H2O = 5-guanidino-2-oxopentanoate + H2O2 + NH4(+). It catalyses the reaction L-histidine + O2 + H2O = 3-(imidazol-5-yl)pyruvate + H2O2 + NH4(+). Functionally, catalyzes an oxidative deamination of predominantly hydrophobic and aromatic L-amino acids, thus producing hydrogen peroxide that may contribute to the diverse toxic effects of this enzyme. Is highly active on L-Met, L-Leu, L-Trp, and L-Phe, moderately active on L-Ile, L-His, and L-Arg, and weakly or not active on L-Gln, L-Val, L-Asn, L-Ala, L-Lys, L-Ser, L-Thr, L-Pro, L-Asp, L-Gly, L-Tyr, L-Cys and L-Glu. This enzyme exhibits diverse biological activities, such as hemorrhage, hemolysis, edema, apoptosis of vascular endothelial cells or tumor cell lines, antibacterial and antiparasitic activities, as well as regulation of platelet aggregation. Its effect on platelets is controversial, since it either induces aggregation or inhibits agonist-induced aggregation. These different effects are probably due to different experimental conditions. In vitro, the enzyme exhibits cytotoxicity against fibroblast cell line and kills Leishmania amazonensis promastigotes, intensified by substrate addition. The polypeptide is L-amino acid oxidase bordonein-L (Crotalus durissus terrificus (South American rattlesnake)).